The sequence spans 575 residues: Thiol:disulfide interchange protein DsbD (575 aa).

The N-terminal stretch at 1–24 (MIKRTLMLFLLLCSPLLTPAAANA) is a signal peptide. Intrachain disulfides connect cysteine 126–cysteine 132 and cysteine 192–cysteine 314. The next 8 membrane-spanning stretches (helical) occupy residues 180-200 (AILIGIGIAFTPCVLPMYPLI), 216-236 (IFWLALSYVQGMAVTYTLLGL), 253-273 (YVLIGLSVLFILLALSMFGLY), 297-317 (LFGVFAMGALAGLICSPCTTA), 336-356 (GLTLYLYALGMGLPLIAVTLF), 367-387 (WMQYVKEAFGFIILALPVFLL), 394-414 (AWGIRLWSLLAVSFLGWGFVL), and 425-445 (VIQLILLILMLIATRPLQDWF). The region spanning 444 to 575 (WFWGTTVTQQ…FNEHLQHLPK (132 aa)) is the Thioredoxin domain. Residues cysteine 490 and cysteine 493 are joined by a disulfide bond.

Belongs to the thioredoxin family. DsbD subfamily.

It is found in the cell inner membrane. It catalyses the reaction [protein]-dithiol + NAD(+) = [protein]-disulfide + NADH + H(+). The enzyme catalyses [protein]-dithiol + NADP(+) = [protein]-disulfide + NADPH + H(+). Required to facilitate the formation of correct disulfide bonds in some periplasmic proteins and for the assembly of the periplasmic c-type cytochromes. Acts by transferring electrons from cytoplasmic thioredoxin to the periplasm. This transfer involves a cascade of disulfide bond formation and reduction steps. This is Thiol:disulfide interchange protein DsbD from Photorhabdus laumondii subsp. laumondii (strain DSM 15139 / CIP 105565 / TT01) (Photorhabdus luminescens subsp. laumondii).